The chain runs to 891 residues: Aconitate hydratase A (891 aa).

[4Fe-4S] cluster contacts are provided by Cys-435, Cys-501, and Cys-504.

Belongs to the aconitase/IPM isomerase family. As to quaternary structure, monomer. The cofactor is [4Fe-4S] cluster.

It carries out the reaction citrate = D-threo-isocitrate. It catalyses the reaction (2S,3R)-3-hydroxybutane-1,2,3-tricarboxylate = 2-methyl-cis-aconitate + H2O. It functions in the pathway carbohydrate metabolism; tricarboxylic acid cycle; isocitrate from oxaloacetate: step 2/2. It participates in organic acid metabolism; propanoate degradation. Its function is as follows. Involved in the catabolism of short chain fatty acids (SCFA) via the tricarboxylic acid (TCA)(acetyl degradation route) and probably the 2-methylcitrate cycle I (propionate degradation route). Catalyzes the reversible isomerization of citrate to isocitrate via cis-aconitate. The apo form of AcnA functions as a RNA-binding regulatory protein. Could catalyze the hydration of 2-methyl-cis-aconitate to yield (2R,3S)-2-methylisocitrate. This chain is Aconitate hydratase A (acn), found in Legionella pneumophila subsp. pneumophila (strain Philadelphia 1 / ATCC 33152 / DSM 7513).